The following is a 380-amino-acid chain: Succinyl-diaminopimelate desuccinylase (380 aa).

His-69 lines the Zn(2+) pocket. Asp-71 is an active-site residue. Asp-102 is a binding site for Zn(2+). Glu-135 serves as the catalytic Proton acceptor. Residues Glu-136, Glu-164, and His-353 each contribute to the Zn(2+) site.

It belongs to the peptidase M20A family. DapE subfamily. As to quaternary structure, homodimer. Zn(2+) is required as a cofactor. Requires Co(2+) as cofactor.

The catalysed reaction is N-succinyl-(2S,6S)-2,6-diaminopimelate + H2O = (2S,6S)-2,6-diaminopimelate + succinate. Its pathway is amino-acid biosynthesis; L-lysine biosynthesis via DAP pathway; LL-2,6-diaminopimelate from (S)-tetrahydrodipicolinate (succinylase route): step 3/3. In terms of biological role, catalyzes the hydrolysis of N-succinyl-L,L-diaminopimelic acid (SDAP), forming succinate and LL-2,6-diaminopimelate (DAP), an intermediate involved in the bacterial biosynthesis of lysine and meso-diaminopimelic acid, an essential component of bacterial cell walls. The protein is Succinyl-diaminopimelate desuccinylase of Ruegeria pomeroyi (strain ATCC 700808 / DSM 15171 / DSS-3) (Silicibacter pomeroyi).